The chain runs to 60 residues: Large ribosomal subunit protein bL32 (60 aa).

The protein belongs to the bacterial ribosomal protein bL32 family.

This Clostridium perfringens (strain ATCC 13124 / DSM 756 / JCM 1290 / NCIMB 6125 / NCTC 8237 / Type A) protein is Large ribosomal subunit protein bL32.